A 79-amino-acid chain; its full sequence is MSDFWHKLGCCVVEKPQPKKKRKRIDRSMIGEPMNFVHLTHIGSGDMGASDGLPKAGTVQEQMRSKCGRDRQWSNSRVL.

S-palmitoyl cysteine attachment occurs at residues C10 and C11. The 14-residue stretch at 30–43 (IGEPMNFVHLTHIG) folds into the CRIB domain. The disordered stretch occupies residues 41-79 (HIGSGDMGASDGLPKAGTVQEQMRSKCGRDRQWSNSRVL). Basic and acidic residues predominate over residues 63–72 (MRSKCGRDRQ).

This sequence belongs to the CDC42SE/SPEC family.

Its subcellular location is the cytoplasm. It localises to the cytoskeleton. It is found in the cell membrane. Functionally, probably involved in the organization of the actin cytoskeleton by acting downstream of CDC42, inducing actin filament assembly. The polypeptide is CDC42 small effector protein 1-B (cdc42se1-b) (Xenopus laevis (African clawed frog)).